We begin with the raw amino-acid sequence, 215 residues long: Pyrrolidone-carboxylate peptidase (215 aa).

Residues Glu-80, Cys-143, and His-167 contribute to the active site.

The protein belongs to the peptidase C15 family. Homotetramer.

The protein resides in the cytoplasm. The enzyme catalyses Release of an N-terminal pyroglutamyl group from a polypeptide, the second amino acid generally not being Pro.. Functionally, removes 5-oxoproline from various penultimate amino acid residues except L-proline. In Bacillus cytotoxicus (strain DSM 22905 / CIP 110041 / 391-98 / NVH 391-98), this protein is Pyrrolidone-carboxylate peptidase.